Consider the following 509-residue polypeptide: Cytochrome P450 monooxygenase AFT11-1 (509 aa).

Cysteine 432 is a binding site for heme.

Belongs to the cytochrome P450 family. Heme serves as cofactor.

It functions in the pathway mycotoxin biosynthesis. Its function is as follows. Cytochrome P450 monooxygenase; part of the gene clusters that mediate the biosynthesis of the host-selective toxins (HSTs) AF-toxins responsible for Alternaria black spot of strawberry disease by the strawberry pathotype. AF-toxin I and III are valine derivatives of 2,3-dyhydroxy-isovaleric acid and 2-hydroxy-isovaleric acid respectively, while AF II is an isoleucine derivative of 2-hydroxy-valeric acid. These derivatives are bound to a 9,10-epoxy-8-hydroxy-9-methyl-decatrienoic acid (EDA) moiety. On cellular level, AF-toxins affect plasma membrane of susceptible cells and cause a sudden increase in loss of K(+) after a few minutes of toxin treatment. The aldo-keto reductase AFTS1 catalyzes the conversion of 2-keto-isovaleric acid (2-KIV) to 2-hydroxy-isovaleric acid (2-HIV) by reduction of its ketone to an alcohol. The acyl-CoA ligase AFT1, the hydrolase AFT2 and the enoyl-CoA hydratases AFT3 and AFT6, but also the polyketide synthase AFT9, the acyl-CoA dehydrogenase AFT10, the cytochrome P450 monooxygenase AFT11 and the oxidoreductase AFT12 are all involved in the biosynthesis of the AK-, AF- and ACT-toxin common EDA structural moiety. The exact function of each enzyme, and of additional enzymes identified within the AF-toxin clusters have still to be determined. In Alternaria alternata (Alternaria rot fungus), this protein is Cytochrome P450 monooxygenase AFT11-1.